The chain runs to 169 residues: uncharacterized protein (169 aa).

This is an uncharacterized protein from Azospirillum brasilense.